Consider the following 51-residue polypeptide: Ribosomal protein eL39-like 2 (51 aa).

This sequence belongs to the eukaryotic ribosomal protein eL39 family. In terms of assembly, component of a male germ cell-specific 60S large ribosomal subunit (LSU), which contains RPL10L and RPL39L, instead of RPL10 and RPL39 paralogs. The composition of the rest of the complex is similar to classical ribosomes. Testis specific.

The protein resides in the cytoplasm. Its function is as follows. Male germ cell-specific component of the ribosome, which is required for the formation of sperm and male fertility. Replaces the RPL39 paralog in the ribosome of male germ cells. The ribosome is a large ribonucleoprotein complex responsible for the synthesis of proteins in the cell. The male germ cell-specific ribosome displays a ribosomal polypeptide exit tunnel of distinct size and charge states compared with the classical ribosome. It is responsible for regulating the biosynthesis and folding of a subset of male germ-cell-specific proteins that are essential for the formation of sperm. In Homo sapiens (Human), this protein is Ribosomal protein eL39-like 2.